The following is a 199-amino-acid chain: Recombination protein RecR (199 aa).

The C4-type zinc finger occupies 57-72 (CSICGNITDEDPCAIC). The Toprim domain occupies 80 to 176 (STILVVEQPK…KVTRLAHGLS (97 aa)).

This sequence belongs to the RecR family.

May play a role in DNA repair. It seems to be involved in an RecBC-independent recombinational process of DNA repair. It may act with RecF and RecO. The sequence is that of Recombination protein RecR from Lacticaseibacillus casei (strain BL23) (Lactobacillus casei).